The sequence spans 89 residues: Small ribosomal subunit protein bS20 (89 aa).

2 stretches are compositionally biased toward basic residues: residues 1-10 (MANIKSKIKS) and 17-29 (ARKR…SRVK). The interval 1-29 (MANIKSKIKSIKTMEKARKRNSMIKSRVK) is disordered.

Belongs to the bacterial ribosomal protein bS20 family.

Functionally, binds directly to 16S ribosomal RNA. The polypeptide is Small ribosomal subunit protein bS20 (Mycoplasmopsis pulmonis (strain UAB CTIP) (Mycoplasma pulmonis)).